We begin with the raw amino-acid sequence, 430 residues long: Serine--tRNA ligase (430 aa).

Residue Thr237–Glu239 coordinates L-serine. Residue Arg268–Glu270 coordinates ATP. L-serine is bound at residue Glu291. Glu355–Ser358 serves as a coordination point for ATP. Position 391 (Ser391) interacts with L-serine.

The protein belongs to the class-II aminoacyl-tRNA synthetase family. Type-1 seryl-tRNA synthetase subfamily. In terms of assembly, homodimer. The tRNA molecule binds across the dimer.

Its subcellular location is the cytoplasm. It carries out the reaction tRNA(Ser) + L-serine + ATP = L-seryl-tRNA(Ser) + AMP + diphosphate + H(+). The enzyme catalyses tRNA(Sec) + L-serine + ATP = L-seryl-tRNA(Sec) + AMP + diphosphate + H(+). Its pathway is aminoacyl-tRNA biosynthesis; selenocysteinyl-tRNA(Sec) biosynthesis; L-seryl-tRNA(Sec) from L-serine and tRNA(Sec): step 1/1. Catalyzes the attachment of serine to tRNA(Ser). Is also able to aminoacylate tRNA(Sec) with serine, to form the misacylated tRNA L-seryl-tRNA(Sec), which will be further converted into selenocysteinyl-tRNA(Sec). This chain is Serine--tRNA ligase, found in Klebsiella pneumoniae (strain 342).